The following is a 215-amino-acid chain: Short neuropeptide F (215 aa).

An N-terminal signal peptide occupies residues 1–22 (MCRINFTTLSLILVLWSGSLMS). Residues 23–56 (EPSQNADGSIKGLYEYLLQREYAAPVSYADHQIK) constitute a propeptide that is removed on maturation. Phenylalanine 69 and phenylalanine 101 each carry phenylalanine amide. Tryptophan 129 is modified (tryptophan amide). A Phenylalanine amide modification is found at phenylalanine 157. Residues 160 to 215 (SDPSWAMFNEHQLDEQQFADATRQPSKTLRGDEPTSIESTEQVESEENSPSNMDEK) constitute a propeptide that is removed on maturation. Residues 173–215 (DEQQFADATRQPSKTLRGDEPTSIESTEQVESEENSPSNMDEK) are disordered.

The protein belongs to the NPY family.

It is found in the secreted. Functionally, plays a role in controlling food intake and regulating body size. The chain is Short neuropeptide F from Aedes aegypti (Yellowfever mosquito).